A 162-amino-acid chain; its full sequence is MNKIAIYPGTFDPITNGHVDLVERALNIFDEIVVAVSTAYGKNTLFDIRIREQMIKEVFKDNQRVKVVSFQGLLVDTAVKHNACAIVRGLRAVSDFDYEFQMSSVNNKLNSDIQTIFLTPSEKFSCISSTLVRAVAIHNYKRVDEFVPECVFREIKLKYSKE.

A substrate-binding site is contributed by threonine 10. ATP contacts are provided by residues 10-11 (TF) and histidine 18. Residues lysine 42, leucine 74, and arginine 88 each contribute to the substrate site. Residues 89–91 (GLR), glutamate 99, and 124–130 (FSCISST) each bind ATP.

It belongs to the bacterial CoaD family. As to quaternary structure, homohexamer. It depends on Mg(2+) as a cofactor.

The protein localises to the cytoplasm. The enzyme catalyses (R)-4'-phosphopantetheine + ATP + H(+) = 3'-dephospho-CoA + diphosphate. The protein operates within cofactor biosynthesis; coenzyme A biosynthesis; CoA from (R)-pantothenate: step 4/5. In terms of biological role, reversibly transfers an adenylyl group from ATP to 4'-phosphopantetheine, yielding dephospho-CoA (dPCoA) and pyrophosphate. The sequence is that of Phosphopantetheine adenylyltransferase from Francisella tularensis subsp. mediasiatica (strain FSC147).